The chain runs to 251 residues: Triosephosphate isomerase (251 aa).

9 to 11 (NWK) contacts substrate. H95 acts as the Electrophile in catalysis. The Proton acceptor role is filled by E167. Residues G173, S213, and 234-235 (GG) each bind substrate.

It belongs to the triosephosphate isomerase family. In terms of assembly, homodimer.

Its subcellular location is the cytoplasm. It carries out the reaction D-glyceraldehyde 3-phosphate = dihydroxyacetone phosphate. Its pathway is carbohydrate biosynthesis; gluconeogenesis. It functions in the pathway carbohydrate degradation; glycolysis; D-glyceraldehyde 3-phosphate from glycerone phosphate: step 1/1. Its function is as follows. Involved in the gluconeogenesis. Catalyzes stereospecifically the conversion of dihydroxyacetone phosphate (DHAP) to D-glyceraldehyde-3-phosphate (G3P). The polypeptide is Triosephosphate isomerase (Pediococcus pentosaceus (strain ATCC 25745 / CCUG 21536 / LMG 10740 / 183-1w)).